A 483-amino-acid chain; its full sequence is Cobyric acid synthase (483 aa).

The region spanning 252 to 430 (ALQVVAVAYP…LHRLFDSGPF (179 aa)) is the GATase cobBQ-type domain. The active-site Nucleophile is cysteine 333. Histidine 422 is an active-site residue.

Belongs to the CobB/CobQ family. CobQ subfamily.

The protein operates within cofactor biosynthesis; adenosylcobalamin biosynthesis. Functionally, catalyzes amidations at positions B, D, E, and G on adenosylcobyrinic A,C-diamide. NH(2) groups are provided by glutamine, and one molecule of ATP is hydrogenolyzed for each amidation. This Halorhodospira halophila (strain DSM 244 / SL1) (Ectothiorhodospira halophila (strain DSM 244 / SL1)) protein is Cobyric acid synthase.